The chain runs to 531 residues: Basal body-orientation factor 1 (531 aa).

Basic residues predominate over residues 1-19 (MPKLKVKAGKGKKGKRKKA). A disordered region spans residues 1–32 (MPKLKVKAGKGKKGKRKKAGKNEHRLDKESEV). The segment covering 20–32 (GKNEHRLDKESEV) has biased composition (basic and acidic residues). Coiled coils occupy residues 26–213 (LDKE…AEKA) and 274–365 (VQEK…VESF). A disordered region spans residues 465–505 (QSRKSPGLKPSPPADVSSIKEKEINTSNLEEKPEESSSTFI). Over residues 482-499 (SIKEKEINTSNLEEKPEE) the composition is skewed to basic and acidic residues.

Belongs to the BBOF1 family. As to expression, multiciliated cells.

It localises to the cytoplasm. The protein resides in the cytoskeleton. It is found in the cilium basal body. In terms of biological role, basal body protein required in multiciliate cells to align and maintain cilia orientation in response to flow. May act by mediating a maturation step that stabilizes and aligns cilia orientation. Not required to respond to planar cell polarity (PCP) or flow-based orientation cues. In Xenopus laevis (African clawed frog), this protein is Basal body-orientation factor 1 (ccdc176).